The sequence spans 515 residues: Bifunctional purine biosynthesis protein PurH (515 aa).

One can recognise an MGS-like domain in the interval Met1 to Val145.

The protein belongs to the PurH family.

It catalyses the reaction (6R)-10-formyltetrahydrofolate + 5-amino-1-(5-phospho-beta-D-ribosyl)imidazole-4-carboxamide = 5-formamido-1-(5-phospho-D-ribosyl)imidazole-4-carboxamide + (6S)-5,6,7,8-tetrahydrofolate. It carries out the reaction IMP + H2O = 5-formamido-1-(5-phospho-D-ribosyl)imidazole-4-carboxamide. It participates in purine metabolism; IMP biosynthesis via de novo pathway; 5-formamido-1-(5-phospho-D-ribosyl)imidazole-4-carboxamide from 5-amino-1-(5-phospho-D-ribosyl)imidazole-4-carboxamide (10-formyl THF route): step 1/1. The protein operates within purine metabolism; IMP biosynthesis via de novo pathway; IMP from 5-formamido-1-(5-phospho-D-ribosyl)imidazole-4-carboxamide: step 1/1. The chain is Bifunctional purine biosynthesis protein PurH from Streptococcus thermophilus (strain ATCC BAA-491 / LMD-9).